We begin with the raw amino-acid sequence, 450 residues long: Bifunctional protein GlmU (450 aa).

Positions 1 to 226 (MLAVAVLAAG…PDEVNGINNR (226 aa)) are pyrophosphorylase. Residues 7-10 (LAAG), K21, Q73, and 78-79 (GT) contribute to the UDP-N-acetyl-alpha-D-glucosamine site. Residue D103 coordinates Mg(2+). G140, E155, N170, and N224 together coordinate UDP-N-acetyl-alpha-D-glucosamine. N224 contacts Mg(2+). The segment at 227 to 247 (KQLAQCEGVLQQRLRDYWMDE) is linker. The segment at 248–450 (GVTFVDPASC…TKDNWANRSI (203 aa)) is N-acetyltransferase. Residues R329 and K347 each coordinate UDP-N-acetyl-alpha-D-glucosamine. H359 serves as the catalytic Proton acceptor. UDP-N-acetyl-alpha-D-glucosamine is bound by residues Y362 and N373. Residues A376, 382 to 383 (NY), A419, and R436 each bind acetyl-CoA.

It in the N-terminal section; belongs to the N-acetylglucosamine-1-phosphate uridyltransferase family. This sequence in the C-terminal section; belongs to the transferase hexapeptide repeat family. Homotrimer. Requires Mg(2+) as cofactor.

The protein resides in the cytoplasm. The catalysed reaction is alpha-D-glucosamine 1-phosphate + acetyl-CoA = N-acetyl-alpha-D-glucosamine 1-phosphate + CoA + H(+). The enzyme catalyses N-acetyl-alpha-D-glucosamine 1-phosphate + UTP + H(+) = UDP-N-acetyl-alpha-D-glucosamine + diphosphate. The protein operates within nucleotide-sugar biosynthesis; UDP-N-acetyl-alpha-D-glucosamine biosynthesis; N-acetyl-alpha-D-glucosamine 1-phosphate from alpha-D-glucosamine 6-phosphate (route II): step 2/2. It participates in nucleotide-sugar biosynthesis; UDP-N-acetyl-alpha-D-glucosamine biosynthesis; UDP-N-acetyl-alpha-D-glucosamine from N-acetyl-alpha-D-glucosamine 1-phosphate: step 1/1. Its pathway is bacterial outer membrane biogenesis; LPS lipid A biosynthesis. Its function is as follows. Catalyzes the last two sequential reactions in the de novo biosynthetic pathway for UDP-N-acetylglucosamine (UDP-GlcNAc). The C-terminal domain catalyzes the transfer of acetyl group from acetyl coenzyme A to glucosamine-1-phosphate (GlcN-1-P) to produce N-acetylglucosamine-1-phosphate (GlcNAc-1-P), which is converted into UDP-GlcNAc by the transfer of uridine 5-monophosphate (from uridine 5-triphosphate), a reaction catalyzed by the N-terminal domain. The polypeptide is Bifunctional protein GlmU (Synechococcus sp. (strain CC9902)).